The chain runs to 436 residues: 3-ketoacyl-CoA thiolase (436 aa).

Residue C99 is the Acyl-thioester intermediate of the active site. Catalysis depends on proton acceptor residues H392 and C422.

It belongs to the thiolase-like superfamily. Thiolase family. Heterotetramer of two alpha chains (FadJ) and two beta chains (FadI).

It localises to the cytoplasm. It catalyses the reaction an acyl-CoA + acetyl-CoA = a 3-oxoacyl-CoA + CoA. It functions in the pathway lipid metabolism; fatty acid beta-oxidation. Catalyzes the final step of fatty acid oxidation in which acetyl-CoA is released and the CoA ester of a fatty acid two carbons shorter is formed. In Pseudoalteromonas translucida (strain TAC 125), this protein is 3-ketoacyl-CoA thiolase.